The chain runs to 367 residues: Phospho-N-acetylmuramoyl-pentapeptide-transferase (367 aa).

Transmembrane regions (helical) follow at residues 30–50 (AAAI…IALL), 71–91 (LPTM…LLWA), 94–114 (TDPH…IGFI), 138–158 (ISLG…SVLM), 169–189 (LTID…TALS), 200–220 (GLAA…AYLA), 237–257 (GGEI…FLWF), 264–284 (IIMG…TALL), 289–309 (LLLP…SLQV), and 344–364 (KIVI…LMTL).

Belongs to the glycosyltransferase 4 family. MraY subfamily. Requires Mg(2+) as cofactor.

It is found in the cell inner membrane. The enzyme catalyses UDP-N-acetyl-alpha-D-muramoyl-L-alanyl-gamma-D-glutamyl-meso-2,6-diaminopimeloyl-D-alanyl-D-alanine + di-trans,octa-cis-undecaprenyl phosphate = di-trans,octa-cis-undecaprenyl diphospho-N-acetyl-alpha-D-muramoyl-L-alanyl-D-glutamyl-meso-2,6-diaminopimeloyl-D-alanyl-D-alanine + UMP. It functions in the pathway cell wall biogenesis; peptidoglycan biosynthesis. Functionally, catalyzes the initial step of the lipid cycle reactions in the biosynthesis of the cell wall peptidoglycan: transfers peptidoglycan precursor phospho-MurNAc-pentapeptide from UDP-MurNAc-pentapeptide onto the lipid carrier undecaprenyl phosphate, yielding undecaprenyl-pyrophosphoryl-MurNAc-pentapeptide, known as lipid I. This Chlorobium phaeovibrioides (strain DSM 265 / 1930) (Prosthecochloris vibrioformis (strain DSM 265)) protein is Phospho-N-acetylmuramoyl-pentapeptide-transferase.